The following is a 327-amino-acid chain: D-alanine--D-alanine ligase (327 aa).

Positions 113-312 (KRLWMTHGLA…YEDFVMQVLA (200 aa)) constitute an ATP-grasp domain. 139–194 (VADLGLPLIVKPAREGSSIGLTKVIAADQMRAAFEKAAGLDADVIAETFIDGAELT) is a binding site for ATP. Positions 266, 279, and 281 each coordinate Mg(2+).

The protein belongs to the D-alanine--D-alanine ligase family. Requires Mg(2+) as cofactor. It depends on Mn(2+) as a cofactor.

It is found in the cytoplasm. The catalysed reaction is 2 D-alanine + ATP = D-alanyl-D-alanine + ADP + phosphate + H(+). It functions in the pathway cell wall biogenesis; peptidoglycan biosynthesis. Its function is as follows. Cell wall formation. The sequence is that of D-alanine--D-alanine ligase from Cupriavidus metallidurans (strain ATCC 43123 / DSM 2839 / NBRC 102507 / CH34) (Ralstonia metallidurans).